Here is a 174-residue protein sequence, read N- to C-terminus: Transmembrane protein 208 (174 aa).

3 consecutive transmembrane segments (helical) span residues 30-50, 54-74, and 111-131; these read NMAI…FEVT, VFMH…MAFM, and GTLL…LAPI. Residues 151–174 are disordered; sequence AQDDNPQVDEKKQKKMDRRMRRMR. The segment covering 163–174 has biased composition (basic residues); it reads QKKMDRRMRRMR.

The protein belongs to the TMEM208 family. In terms of assembly, interacts with fz. In terms of tissue distribution, expressed in the brain.

It localises to the endoplasmic reticulum membrane. May play an important role during development and helps to maintain proper levels of Fz. In Drosophila melanogaster (Fruit fly), this protein is Transmembrane protein 208.